A 369-amino-acid polypeptide reads, in one-letter code: MESTKIAPSFDRASELKAFDETKTGVKGLVDSGISKIPRIFHHSSVELANPKPLPSDLLHLKTIPTIDLGGRDFQDAIKHKNAIEGIKEAAAKWGFFQVINHGVSLELLEKMKDGVRDFHEQPPEVRKDLYSRDFGRKFIYLSNFDLYTAAAANWRDTFYCYMAPDPPEPQDLPEICRDVMMEYSKQVMILGEFLFELLSEALGLNPNHLKDMECLKGLRMLCHYFPPCPEPDLTFGTSKHSDGSFLTVLLPDNIEGLQVCREGYWFDVPHVPGALIINIGDLLQLITNDKFISLKHRVLANRATRARVSVACFFHTHVKPNPRVYGPIKELVSEENPPKYRETTIRDYATYFNGKGLGGTSALLDFKV.

The Fe2OG dioxygenase domain maps to 217–318 (KGLRMLCHYF…VSVACFFHTH (102 aa)). Residues His241, Asp243, and His297 each coordinate Fe cation.

This sequence belongs to the iron/ascorbate-dependent oxidoreductase family. Requires Fe cation as cofactor.

The protein is 1-aminocyclopropane-1-carboxylate oxidase homolog 2 of Arabidopsis thaliana (Mouse-ear cress).